The chain runs to 320 residues: Eukaryotic translation initiation factor 3 subunit G (320 aa).

A disordered region spans residues 1–25; that stretch reads MPTGDFDSKPSWADQVEEEGEDDKC. Residues Ser-8 and Ser-11 each carry the phosphoserine modification. A phosphothreonine mark is found at Thr-38 and Thr-41. Phosphoserine occurs at positions 42, 189, 223, and 264. The segment at 209–234 is disordered; the sequence is KTGKYVPPSLRDGASRRGESMQPNRR. Residues 221 to 234 are compositionally biased toward basic and acidic residues; that stretch reads GASRRGESMQPNRR. Residues 239–317 form the RRM domain; sequence ATIRVTNLSE…LILNVEWAKP (79 aa).

The protein belongs to the eIF-3 subunit G family. In terms of assembly, component of the eukaryotic translation initiation factor 3 (eIF-3) complex, which is composed of 13 subunits: EIF3A, EIF3B, EIF3C, EIF3D, EIF3E, EIF3F, EIF3G, EIF3H, EIF3I, EIF3J, EIF3K, EIF3L and EIF3M. The eIF-3 complex appears to include 3 stable modules: module A is composed of EIF3A, EIF3B, EIF3G and EIF3I; module B is composed of EIF3F, EIF3H, and EIF3M; and module C is composed of EIF3C, EIF3D, EIF3E, EIF3K and EIF3L. EIF3C of module C binds EIF3B of module A and EIF3H of module B, thereby linking the three modules. EIF3J is a labile subunit that binds to the eIF-3 complex via EIF3B. The eIF-3 complex interacts with RPS6KB1 under conditions of nutrient depletion. Mitogenic stimulation leads to binding and activation of a complex composed of FRAP1 and RAPTOR, leading to phosphorylation and release of RPS6KB1 and binding of EIF4B to eIF-3. Interacts (via C-terminus) with AIFM1 (via N-terminus). Interacts with DHX33; the interaction is independent of RNA. Post-translationally, phosphorylated. Phosphorylation is enhanced upon serum stimulation.

The protein resides in the cytoplasm. It is found in the nucleus. Its subcellular location is the perinuclear region. In terms of biological role, RNA-binding component of the eukaryotic translation initiation factor 3 (eIF-3) complex, which is required for several steps in the initiation of protein synthesis. The eIF-3 complex associates with the 40S ribosome and facilitates the recruitment of eIF-1, eIF-1A, eIF-2:GTP:methionyl-tRNAi and eIF-5 to form the 43S pre-initiation complex (43S PIC). The eIF-3 complex stimulates mRNA recruitment to the 43S PIC and scanning of the mRNA for AUG recognition. The eIF-3 complex is also required for disassembly and recycling of post-termination ribosomal complexes and subsequently prevents premature joining of the 40S and 60S ribosomal subunits prior to initiation. The eIF-3 complex specifically targets and initiates translation of a subset of mRNAs involved in cell proliferation, including cell cycling, differentiation and apoptosis, and uses different modes of RNA stem-loop binding to exert either translational activation or repression. This subunit can bind 18S rRNA. This Bos taurus (Bovine) protein is Eukaryotic translation initiation factor 3 subunit G.